A 579-amino-acid chain; its full sequence is Thiol:disulfide interchange protein DsbD (579 aa).

The N-terminal stretch at 1–16 (MKKLFLFFTLIFTAFA) is a signal peptide. Cystine bridges form between cysteine 124–cysteine 129 and cysteine 193–cysteine 315. 8 consecutive transmembrane segments (helical) span residues 178 to 198 (IFGF…LPML), 230 to 250 (LTYT…QIAL), 254 to 274 (YVMI…FGLF), 296 to 316 (GAFG…SPCT), 337 to 357 (AATL…ITLF), 376 to 396 (FGFV…PEVW), 397 to 417 (EPRL…LQMS), and 420 to 440 (GFGY…VQPL). Positions 449 to 579 (TTTQSAVENM…AFSNWLKALH (131 aa)) constitute a Thioredoxin domain. Cysteines 495 and 498 form a disulfide.

This sequence belongs to the thioredoxin family. DsbD subfamily.

The protein resides in the cell inner membrane. It catalyses the reaction [protein]-dithiol + NAD(+) = [protein]-disulfide + NADH + H(+). The catalysed reaction is [protein]-dithiol + NADP(+) = [protein]-disulfide + NADPH + H(+). Required to facilitate the formation of correct disulfide bonds in some periplasmic proteins and for the assembly of the periplasmic c-type cytochromes. Acts by transferring electrons from cytoplasmic thioredoxin to the periplasm. This transfer involves a cascade of disulfide bond formation and reduction steps. The polypeptide is Thiol:disulfide interchange protein DsbD (Haemophilus influenzae (strain 86-028NP)).